Reading from the N-terminus, the 22-residue chain is Heat shock 70-related protein 1, mitochondrial (22 aa).

It belongs to the heat shock protein 70 family.

The protein resides in the mitochondrion. The sequence is that of Heat shock 70-related protein 1, mitochondrial from Leishmania tarentolae (Sauroleishmania tarentolae).